Here is a 402-residue protein sequence, read N- to C-terminus: Succinylornithine transaminase (402 aa).

N6-(pyridoxal phosphate)lysine is present on lysine 252.

It belongs to the class-III pyridoxal-phosphate-dependent aminotransferase family. AstC subfamily. The cofactor is pyridoxal 5'-phosphate.

It carries out the reaction N(2)-succinyl-L-ornithine + 2-oxoglutarate = N-succinyl-L-glutamate 5-semialdehyde + L-glutamate. Its pathway is amino-acid degradation; L-arginine degradation via AST pathway; L-glutamate and succinate from L-arginine: step 3/5. Catalyzes the transamination of N(2)-succinylornithine and alpha-ketoglutarate into N(2)-succinylglutamate semialdehyde and glutamate. Can also act as an acetylornithine aminotransferase. This Photorhabdus laumondii subsp. laumondii (strain DSM 15139 / CIP 105565 / TT01) (Photorhabdus luminescens subsp. laumondii) protein is Succinylornithine transaminase.